The chain runs to 233 residues: Ribitol-5-phosphate cytidylyltransferase (233 aa).

CTP contacts are provided by residues 7-10 (LAGG) and 80-86 (GADRNET).

It belongs to the IspD/TarI cytidylyltransferase family. TarI subfamily.

It catalyses the reaction D-ribitol 5-phosphate + CTP + H(+) = CDP-L-ribitol + diphosphate. Its pathway is cell wall biogenesis; poly(ribitol phosphate) teichoic acid biosynthesis. Its function is as follows. Catalyzes the transfer of the cytidylyl group of CTP to D-ribitol 5-phosphate. The sequence is that of Ribitol-5-phosphate cytidylyltransferase from Lactiplantibacillus plantarum (strain ATCC BAA-793 / NCIMB 8826 / WCFS1) (Lactobacillus plantarum).